Here is a 3371-residue protein sequence, read N- to C-terminus: Abnormal spindle-like microcephaly-associated protein homolog (3371 aa).

Phosphoserine is present on residues Ser-212, Ser-215, Ser-300, Ser-325, and Ser-540. Positions 536–559 (RPHFSPVESKTSTVKHTKKVVTSS) are disordered. The region spanning 852 to 988 (KASKEILLAF…LLWKIALAFQ (137 aa)) is the Calponin-homology (CH) 1 domain. The stretch at 989–1014 (VDISLNLDQLKEEIDFLKNTQSMKKT) forms a coiled coil. Ser-1035 carries the post-translational modification Phosphoserine. The Calponin-homology (CH) 2 domain occupies 1042–1193 (SESVKLLMDW…YLSFLCARLL (152 aa)). IQ domains are found at residues 1198–1227 (ETRA…RDKA), 1396–1427 (EERA…IIIQ), 1469–1500 (KRAA…VLQS), 1564–1593 (TRSA…SIVK), 1587–1616 (ILTS…ATVK), 1610–1639 (LKKA…IAQQ), 1644–1673 (RRAS…AAVS), 1667–1698 (QRKA…VVIQ), 1717–1746 (VRRA…AALK), 1740–1769 (QSAA…SALK), 1790–1819 (TRTA…AAVK), 1813–1844 (EHEA…SVIQ), 1863–1894 (LRRA…IIIQ), 1886–1917 (QQRC…HLIQ), 1936–1965 (TKXA…AAAT), 1959–1990 (MHQA…VIIQ), 2009–2040 (VKKA…TLIK), 2032–2063 (MHMA…IIIQ), 2082–2113 (ILKA…TLIQ), 2105–2134 (MRTA…VTKT), 2155–2186 (LRRS…AVIQ), 2227–2258 (LQKA…TVLQ), 2250–2281 (MRRA…QVIQ), 2300–2331 (QRHS…TLIQ), 2323–2354 (MHAS…VFVQ), 2396–2427 (MHRA…VLIQ), 2446–2477 (WRHS…VIIQ), 2539–2570 (RHQA…VFVQ), 2580–2609 (RTQA…AATR), 2603–2634 (MHLA…VVIQ), 2653–2682 (IQKS…KKMA), 2729–2760 (QRKA…RIQS), 2751–2780 (QRRA…AALT), 2824–2853 (IRSS…STIK), 2847–2878 (LKDS…RIQA), 2869–2900 (EVKA…RIIQ), 2944–2973 (RHQA…AALT), 2994–3025 (LKKS…RLLH), 3096–3125 (HSRA…RIAK), and 3119–3150 (FNKR…IRQR).

It is found in the cytoplasm. The protein localises to the cytoskeleton. The protein resides in the spindle. Its subcellular location is the nucleus. Functionally, probable role in mitotic spindle regulation and coordination of mitotic processes. May have a preferential role in regulating neurogenesis. This Bos taurus (Bovine) protein is Abnormal spindle-like microcephaly-associated protein homolog (ASPM).